The chain runs to 575 residues: Carboxylesterase 5A (575 aa).

Residues 1–27 (MSGEWGHLGQTLIWAVWVLAAATEGPA) form the signal peptide. Asn-82 carries N-linked (GlcNAc...) asparagine glycosylation. Cys-94 and Cys-121 are oxidised to a cystine. Ser-226 acts as the Acyl-ester intermediate in catalysis. Cys-280 and Cys-291 are disulfide-bonded. An N-linked (GlcNAc...) asparagine glycan is attached at Asn-281. The active-site Charge relay system is the Glu-345. An N-linked (GlcNAc...) asparagine glycan is attached at Asn-363. His-454 functions as the Charge relay system in the catalytic mechanism. Residue Asn-524 is glycosylated (N-linked (GlcNAc...) asparagine).

This sequence belongs to the type-B carboxylesterase/lipase family. N-glycosylated.

The protein localises to the secreted. It catalyses the reaction a carboxylic ester + H2O = an alcohol + a carboxylate + H(+). Its function is as follows. Involved in the detoxification of xenobiotics and in the activation of ester and amide prodrugs. The sequence is that of Carboxylesterase 5A (CES5A) from Canis lupus familiaris (Dog).